The chain runs to 431 residues: Asparagine--tRNA ligase (431 aa).

It belongs to the class-II aminoacyl-tRNA synthetase family.

The protein localises to the cytoplasm. It catalyses the reaction tRNA(Asn) + L-asparagine + ATP = L-asparaginyl-tRNA(Asn) + AMP + diphosphate + H(+). The protein is Asparagine--tRNA ligase of Thermococcus kodakarensis (strain ATCC BAA-918 / JCM 12380 / KOD1) (Pyrococcus kodakaraensis (strain KOD1)).